The sequence spans 442 residues: Adenylosuccinate synthetase (442 aa).

Residues 25 to 31 (GDEGKGK), 53 to 55 (GHT), and K62 each bind GTP. Residue D26 is the Proton acceptor of the active site. Positions 26 and 53 each coordinate Mg(2+). IMP contacts are provided by residues 26-29 (DEGK) and 51-54 (NAGH). The Proton donor role is filled by H54. IMP contacts are provided by T141, R155, N232, and T247. GTP is bound at residue T307. A substrate-binding site is contributed by 307–313 (TTTKRPR). R311 contacts IMP. Residues R313, 339-341 (KLD), and 425-427 (GVG) contribute to the GTP site.

Belongs to the adenylosuccinate synthetase family. In terms of assembly, homodimer. Mg(2+) is required as a cofactor.

It is found in the cytoplasm. The catalysed reaction is IMP + L-aspartate + GTP = N(6)-(1,2-dicarboxyethyl)-AMP + GDP + phosphate + 2 H(+). Its pathway is purine metabolism; AMP biosynthesis via de novo pathway; AMP from IMP: step 1/2. Functionally, plays an important role in the salvage pathway for purine nucleotide biosynthesis. Catalyzes the first committed step in the biosynthesis of AMP from IMP. The chain is Adenylosuccinate synthetase (Adss) from Plasmodium falciparum (isolate 3D7).